Consider the following 603-residue polypeptide: Elongation factor 4 (603 aa).

The region spanning 7-189 (SRLRNFCIIA…AVVDRIPSPK (183 aa)) is the tr-type G domain. GTP is bound by residues 19 to 24 (DHGKST) and 136 to 139 (NKVD).

Belongs to the TRAFAC class translation factor GTPase superfamily. Classic translation factor GTPase family. LepA subfamily.

Its subcellular location is the cell inner membrane. It carries out the reaction GTP + H2O = GDP + phosphate + H(+). Functionally, required for accurate and efficient protein synthesis under certain stress conditions. May act as a fidelity factor of the translation reaction, by catalyzing a one-codon backward translocation of tRNAs on improperly translocated ribosomes. Back-translocation proceeds from a post-translocation (POST) complex to a pre-translocation (PRE) complex, thus giving elongation factor G a second chance to translocate the tRNAs correctly. Binds to ribosomes in a GTP-dependent manner. The polypeptide is Elongation factor 4 (Prochlorococcus marinus (strain NATL2A)).